We begin with the raw amino-acid sequence, 411 residues long: Glycerol-3-phosphate dehydrogenase [NAD(+)] (411 aa).

NAD(+)-binding positions include 71 to 76 (GSGNWG), phenylalanine 103, and phenylalanine 159. Residue lysine 182 participates in substrate binding. Alanine 215 is an NAD(+) binding site. Lysine 275 serves as the catalytic Proton acceptor. Arginine 340 and glutamine 369 together coordinate NAD(+). 340 to 341 (RN) serves as a coordination point for substrate.

This sequence belongs to the NAD-dependent glycerol-3-phosphate dehydrogenase family.

The enzyme catalyses sn-glycerol 3-phosphate + NAD(+) = dihydroxyacetone phosphate + NADH + H(+). The polypeptide is Glycerol-3-phosphate dehydrogenase [NAD(+)] (GPD) (Lachancea thermotolerans (Yeast)).